The primary structure comprises 274 residues: Large ribosomal subunit protein uL2cz/uL2cy (274 aa).

Disordered stretches follow at residues 1–23 and 224–274; these read MAIH…SKVK and NPVD…RRSK.

This sequence belongs to the universal ribosomal protein uL2 family. As to quaternary structure, part of the 50S ribosomal subunit.

Its subcellular location is the plastid. It localises to the chloroplast. This chain is Large ribosomal subunit protein uL2cz/uL2cy (rpl2-A), found in Lactuca sativa (Garden lettuce).